Consider the following 155-residue polypeptide: Small ribosomal subunit protein uS7 (155 aa).

Belongs to the universal ribosomal protein uS7 family. In terms of assembly, part of the 30S ribosomal subunit. Contacts proteins S9 and S11.

Its function is as follows. One of the primary rRNA binding proteins, it binds directly to 16S rRNA where it nucleates assembly of the head domain of the 30S subunit. Is located at the subunit interface close to the decoding center, probably blocks exit of the E-site tRNA. The sequence is that of Small ribosomal subunit protein uS7 from Thermotoga maritima (strain ATCC 43589 / DSM 3109 / JCM 10099 / NBRC 100826 / MSB8).